The primary structure comprises 324 residues: NADH-ubiquinone oxidoreductase chain 1 (324 aa).

A run of 8 helical transmembrane segments spans residues 10–30, 76–96, 107–127, 143–163, 178–198, 229–249, 260–280, and 300–320; these read MIMT…LTLV, FLFI…WIPL, LGLL…LWSG, VAQT…TIML, PIYL…STLA, LFFL…ITLF, ELFS…FLWV, and FLPL…SYAG.

This sequence belongs to the complex I subunit 1 family.

It is found in the mitochondrion inner membrane. It carries out the reaction a ubiquinone + NADH + 5 H(+)(in) = a ubiquinol + NAD(+) + 4 H(+)(out). In terms of biological role, core subunit of the mitochondrial membrane respiratory chain NADH dehydrogenase (Complex I) that is believed to belong to the minimal assembly required for catalysis. Complex I functions in the transfer of electrons from NADH to the respiratory chain. The immediate electron acceptor for the enzyme is believed to be ubiquinone. This is NADH-ubiquinone oxidoreductase chain 1 (MT-ND1) from Excalfactoria chinensis (Blue-breasted quail).